The primary structure comprises 175 residues: Co-chaperone protein daf-41 (175 aa).

One can recognise a CS domain in the interval Ala-2–Leu-89. The disordered stretch occupies residues Asp-109–Ala-175. Residues Gly-148–Glu-168 are compositionally biased toward acidic residues.

The protein belongs to the p23/wos2 family. As to expression, expressed in anterior and posterior neurons including ASE, AWC, ASI and ADL amphids and phasmid sensory neurons, peripheral neurons and ventral cord motorneurons. Additionally expressed in body wall muscle, pharynx, vulva, germ cells and intestine.

Co-chaperone for hsp90/daf-21. Involved in regulation of longevity, larval entry and exit from the dauer stage of development and response to environmental cues, such as oxidative stress, in a temperature-dependent manner. Role in daf-16 and hsf-1 inhibition at elevated temperatures. The protein is Co-chaperone protein daf-41 of Caenorhabditis elegans.